We begin with the raw amino-acid sequence, 360 residues long: MLVWLAEHLVKYYSGFNVFSYLTFRAIVSLLTALFISLWMGPRMIARLQKLSFGQVVRNDGPESHFSKRGTPTMGGIMILTSIVISVLLWAYPSNPYVWCVLVVLIGYGIIGFVDDYRKVVRKDTKGLIARWKYFWMSVIALGVAFALYLVGKDTPATQLVVPFFKDVMPQLGLFYILLSYFVIVGTGNAVNLTDGLDGLAIMPTVFVAAGFALVAWATGNMNFANYLHIPYLRHAGELVIVCTAIVGAGLGFLWFNTYPAQVFMGDVGSLALGGALGIIAVLLRQEFLLVIMGGVFVVETLSVILQVGSFKLRGQRIFRMAPIHHHYELKGWPEPRVIVRFWIISLMLVLIGLATLKVR.

Topologically, residues 1–25 are periplasmic; sequence MLVWLAEHLVKYYSGFNVFSYLTFR. Residues 26–46 form a helical membrane-spanning segment; the sequence is AIVSLLTALFISLWMGPRMIA. Residues 47-71 are Cytoplasmic-facing; sequence RLQKLSFGQVVRNDGPESHFSKRGT. Residues 72-92 traverse the membrane as a helical segment; sequence PTMGGIMILTSIVISVLLWAY. Pro-93 is a topological domain (periplasmic). The helical transmembrane segment at 94–114 threads the bilayer; the sequence is SNPYVWCVLVVLIGYGIIGFV. Residues 115-131 lie on the Cytoplasmic side of the membrane; the sequence is DDYRKVVRKDTKGLIAR. Residues 132–152 traverse the membrane as a helical segment; it reads WKYFWMSVIALGVAFALYLVG. Residues 153 to 167 lie on the Periplasmic side of the membrane; that stretch reads KDTPATQLVVPFFKD. A helical membrane pass occupies residues 168-188; it reads VMPQLGLFYILLSYFVIVGTG. The Cytoplasmic portion of the chain corresponds to 189 to 198; the sequence is NAVNLTDGLD. Residues 199–219 traverse the membrane as a helical segment; the sequence is GLAIMPTVFVAAGFALVAWAT. Residues 220–235 lie on the Periplasmic side of the membrane; it reads GNMNFANYLHIPYLRH. The chain crosses the membrane as a helical span at residues 236 to 256; the sequence is AGELVIVCTAIVGAGLGFLWF. Topologically, residues 257 to 262 are cytoplasmic; that stretch reads NTYPAQ. The helical transmembrane segment at 263 to 283 threads the bilayer; it reads VFMGDVGSLALGGALGIIAVL. The Periplasmic segment spans residues 284–287; sequence LRQE. Residues 288–308 traverse the membrane as a helical segment; it reads FLLVIMGGVFVVETLSVILQV. Over 309–337 the chain is Cytoplasmic; sequence GSFKLRGQRIFRMAPIHHHYELKGWPEPR. The helical transmembrane segment at 338-358 threads the bilayer; that stretch reads VIVRFWIISLMLVLIGLATLK. Over 359–360 the chain is Periplasmic; it reads VR.

This sequence belongs to the glycosyltransferase 4 family. MraY subfamily. It depends on Mg(2+) as a cofactor.

The protein resides in the cell inner membrane. It catalyses the reaction UDP-N-acetyl-alpha-D-muramoyl-L-alanyl-gamma-D-glutamyl-meso-2,6-diaminopimeloyl-D-alanyl-D-alanine + di-trans,octa-cis-undecaprenyl phosphate = di-trans,octa-cis-undecaprenyl diphospho-N-acetyl-alpha-D-muramoyl-L-alanyl-D-glutamyl-meso-2,6-diaminopimeloyl-D-alanyl-D-alanine + UMP. The protein operates within cell wall biogenesis; peptidoglycan biosynthesis. Catalyzes the initial step of the lipid cycle reactions in the biosynthesis of the cell wall peptidoglycan: transfers peptidoglycan precursor phospho-MurNAc-pentapeptide from UDP-MurNAc-pentapeptide onto the lipid carrier undecaprenyl phosphate, yielding undecaprenyl-pyrophosphoryl-MurNAc-pentapeptide, known as lipid I. This chain is Phospho-N-acetylmuramoyl-pentapeptide-transferase, found in Salmonella gallinarum (strain 287/91 / NCTC 13346).